A 442-amino-acid polypeptide reads, in one-letter code: ATP-dependent protease ATPase subunit HslU (442 aa).

ATP is bound by residues isoleucine 18 and glycine 60–glutamate 65. Residues leucine 136 to glutamine 156 form a disordered region. Residues aspartate 255, glutamate 320, and arginine 392 each coordinate ATP.

The protein belongs to the ClpX chaperone family. HslU subfamily. In terms of assembly, a double ring-shaped homohexamer of HslV is capped on each side by a ring-shaped HslU homohexamer. The assembly of the HslU/HslV complex is dependent on binding of ATP.

It localises to the cytoplasm. Its function is as follows. ATPase subunit of a proteasome-like degradation complex; this subunit has chaperone activity. The binding of ATP and its subsequent hydrolysis by HslU are essential for unfolding of protein substrates subsequently hydrolyzed by HslV. HslU recognizes the N-terminal part of its protein substrates and unfolds these before they are guided to HslV for hydrolysis. The sequence is that of ATP-dependent protease ATPase subunit HslU from Shewanella sp. (strain MR-7).